The sequence spans 257 residues: Beta-fibrinogenase mucrofibrase-1 (257 aa).

An N-terminal signal peptide occupies residues 1–18; the sequence is MVLIRVLANLLILQLSYA. Positions 19–24 are excised as a propeptide; sequence QKSSEL. A Peptidase S1 domain is found at 25–248; it reads VIGGDECNIN…HLDWIKGIIA (224 aa). Intrachain disulfides connect C31–C162, C49–C65, C97–C255, C141–C209, C173–C188, and C199–C224. Active-site charge relay system residues include H64 and D109. The active-site Charge relay system is the S203.

This sequence belongs to the peptidase S1 family. Snake venom subfamily. Monomer. As to expression, expressed by the venom gland.

The protein localises to the secreted. In terms of biological role, snake venom serine protease with strong beta-fibrinogenolytic activities, angiotensin I (AGT)-degrading activities and strong kallikrein-like activities in vitro, releasing bradykinin from kininogen (KNG1). Intravenous injection strongly lowers blood pressure in experimental rats, which may be explained by the action on angiotensin I and kininogen. This is Beta-fibrinogenase mucrofibrase-1 from Protobothrops mucrosquamatus (Taiwan habu).